A 244-amino-acid chain; its full sequence is Acetoacetate decarboxylase (244 aa).

Residue Lys-115 is the Schiff-base intermediate with acetoacetate of the active site.

It belongs to the ADC family.

The enzyme catalyses acetoacetate + H(+) = acetone + CO2. In terms of biological role, catalyzes the conversion of acetoacetate to acetone and carbon dioxide. This Streptomyces nogalater protein is Acetoacetate decarboxylase.